The sequence spans 111 residues: Cornifelin homolog B (111 aa).

Belongs to the cornifelin family.

The protein is Cornifelin homolog B (cnfn-b) of Xenopus laevis (African clawed frog).